A 290-amino-acid polypeptide reads, in one-letter code: Glycine--tRNA ligase alpha subunit (290 aa).

Belongs to the class-II aminoacyl-tRNA synthetase family. As to quaternary structure, tetramer of two alpha and two beta subunits.

Its subcellular location is the cytoplasm. The catalysed reaction is tRNA(Gly) + glycine + ATP = glycyl-tRNA(Gly) + AMP + diphosphate. This is Glycine--tRNA ligase alpha subunit from Prochlorococcus marinus (strain NATL2A).